The primary structure comprises 492 residues: Probable malate:quinone oxidoreductase (492 aa).

Belongs to the MQO family. FAD serves as cofactor.

The enzyme catalyses (S)-malate + a quinone = a quinol + oxaloacetate. Its pathway is carbohydrate metabolism; tricarboxylic acid cycle; oxaloacetate from (S)-malate (quinone route): step 1/1. In Methylobacillus flagellatus (strain ATCC 51484 / DSM 6875 / VKM B-1610 / KT), this protein is Probable malate:quinone oxidoreductase.